The sequence spans 928 residues: Isoleucine--tRNA ligase (928 aa).

The 'HIGH' region signature appears at 57–67 (PFANGNIHMGH). Residue Glu552 participates in L-isoleucyl-5'-AMP binding. The 'KMSKS' region motif lies at 593–597 (KMSKS). Lys596 lines the ATP pocket. Cys887, Cys890, Cys907, and Cys910 together coordinate Zn(2+).

This sequence belongs to the class-I aminoacyl-tRNA synthetase family. IleS type 1 subfamily. Monomer. It depends on Zn(2+) as a cofactor.

The protein resides in the cytoplasm. The enzyme catalyses tRNA(Ile) + L-isoleucine + ATP = L-isoleucyl-tRNA(Ile) + AMP + diphosphate. Catalyzes the attachment of isoleucine to tRNA(Ile). As IleRS can inadvertently accommodate and process structurally similar amino acids such as valine, to avoid such errors it has two additional distinct tRNA(Ile)-dependent editing activities. One activity is designated as 'pretransfer' editing and involves the hydrolysis of activated Val-AMP. The other activity is designated 'posttransfer' editing and involves deacylation of mischarged Val-tRNA(Ile). In Lacticaseibacillus casei (strain BL23) (Lactobacillus casei), this protein is Isoleucine--tRNA ligase.